Consider the following 953-residue polypeptide: Xylosyltransferase 1 (953 aa).

At 1–17 the chain is on the cytoplasmic side; it reads MVAAPCARRLARRSHSA. Residues 18–38 traverse the membrane as a helical; Signal-anchor for type II membrane protein segment; the sequence is LLAALMVLLLHTLVVWNFSSL. Residues 39–953 lie on the Lumenal side of the membrane; it reads DSGAGEQRRA…GAVKPDGRLR (915 aa). Residues 48–62 show a composition bias toward low complexity; sequence AGAAAGAAEQQQPAA. Disordered stretches follow at residues 48–67 and 74–251; these read AGAAAGAAEQQQPAAPRRER and LPAA…APKC. Residues 79 to 97 show a composition bias toward gly residues; the sequence is GGPGGRAGGGGARGGGPGG. Residues 138 to 154 are compositionally biased toward basic and acidic residues; that stretch reads KVRTDSNNENSVPKDFE. The segment covering 156-165 has biased composition (polar residues); that stretch reads VDNSNFAPRT. Basic and acidic residues-rich tracts occupy residues 170–197 and 205–216; these read HQPELAKKPPSRQKEHLQRKLDALDKRQ and GPKEVLPPREKA. The N-linked (GlcNAc...) asparagine glycan is linked to Asn-219. Intrachain disulfides connect Cys-251/Cys-279, Cys-295/Cys-536, Cys-555/Cys-568, and Cys-557/Cys-566. UDP-alpha-D-xylose is bound by residues Val-327, Asp-355, and 384–386; that span reads TIW. Asn-415 carries N-linked (GlcNAc...) asparagine glycosylation. UDP-alpha-D-xylose is bound at residue 488-489; it reads DW. UDP-alpha-D-xylose-binding positions include Ser-569 and 592 to 593; that span reads RK. 2 disulfides stabilise this stretch: Cys-669/Cys-921 and Cys-914/Cys-927. A glycan (N-linked (GlcNAc...) asparagine) is linked at Asn-771. The segment at 933-953 is disordered; that stretch reads SSFSPDPKSELGAVKPDGRLR.

The protein belongs to the glycosyltransferase 14 family. XylT subfamily. As to quaternary structure, monomer. It depends on a divalent metal cation as a cofactor. In terms of processing, contains 7 disulfide bonds. Post-translationally, N-glycosylated. In terms of tissue distribution, detected in brain, spleen, kidney and testis, and at low levels in skeletal muscle.

The protein localises to the golgi apparatus membrane. It catalyses the reaction UDP-alpha-D-xylose + L-seryl-[protein] = 3-O-(beta-D-xylosyl)-L-seryl-[protein] + UDP + H(+). Its pathway is glycan metabolism; chondroitin sulfate biosynthesis. The protein operates within glycan metabolism; heparan sulfate biosynthesis. Its function is as follows. Catalyzes the first step in the biosynthesis of chondroitin sulfate and dermatan sulfate proteoglycans, such as DCN. Transfers D-xylose from UDP-D-xylose to specific serine residues of the core protein. Required for normal maturation of chondrocytes during bone development, normal onset of ossification and normal embryonic and postnatal skeleton development, especially of the long bones. In Mus musculus (Mouse), this protein is Xylosyltransferase 1 (Xylt1).